We begin with the raw amino-acid sequence, 283 residues long: Thymidylate synthase (283 aa).

DUMP is bound at residue R22. C160 acts as the Nucleophile in catalysis. Residues 180 to 183 (RSCD), N191, and 221 to 223 (HIY) each bind dUMP. D183 serves as a coordination point for (6R)-5,10-methylene-5,6,7,8-tetrahydrofolate. S282 lines the (6R)-5,10-methylene-5,6,7,8-tetrahydrofolate pocket.

It belongs to the thymidylate synthase family. Bacterial-type ThyA subfamily. Homodimer.

The protein resides in the cytoplasm. The enzyme catalyses dUMP + (6R)-5,10-methylene-5,6,7,8-tetrahydrofolate = 7,8-dihydrofolate + dTMP. The protein operates within pyrimidine metabolism; dTTP biosynthesis. Functionally, catalyzes the reductive methylation of 2'-deoxyuridine-5'-monophosphate (dUMP) to 2'-deoxythymidine-5'-monophosphate (dTMP) while utilizing 5,10-methylenetetrahydrofolate (mTHF) as the methyl donor and reductant in the reaction, yielding dihydrofolate (DHF) as a by-product. This enzymatic reaction provides an intracellular de novo source of dTMP, an essential precursor for DNA biosynthesis. The polypeptide is Thymidylate synthase (Pseudoalteromonas translucida (strain TAC 125)).